We begin with the raw amino-acid sequence, 879 residues long: Leucine--tRNA ligase (879 aa).

Positions 45 to 55 (PYPSGALHMGH) match the 'HIGH' region motif. The 'KMSKS' region motif lies at 637–641 (KMSKS). K640 lines the ATP pocket.

This sequence belongs to the class-I aminoacyl-tRNA synthetase family.

The protein localises to the cytoplasm. It catalyses the reaction tRNA(Leu) + L-leucine + ATP = L-leucyl-tRNA(Leu) + AMP + diphosphate. The sequence is that of Leucine--tRNA ligase from Xylella fastidiosa (strain M23).